We begin with the raw amino-acid sequence, 209 residues long: Guanylate kinase (209 aa).

The Guanylate kinase-like domain occupies 7–185 (GNLYIVAAPS…AAMELQSIVI (179 aa)). 14–21 (APSGGGKT) serves as a coordination point for ATP.

It belongs to the guanylate kinase family.

Its subcellular location is the cytoplasm. It catalyses the reaction GMP + ATP = GDP + ADP. Essential for recycling GMP and indirectly, cGMP. This Legionella pneumophila (strain Lens) protein is Guanylate kinase.